The chain runs to 257 residues: Na(+)-translocating NADH-quinone reductase subunit C (257 aa).

A helical transmembrane segment spans residues 13–33 (LTVVVLLSLICSLIVASAAVL). An FMN phosphoryl threonine modification is found at threonine 224.

This sequence belongs to the NqrC family. As to quaternary structure, composed of six subunits; NqrA, NqrB, NqrC, NqrD, NqrE and NqrF. Requires FMN as cofactor.

It localises to the cell inner membrane. The catalysed reaction is a ubiquinone + n Na(+)(in) + NADH + H(+) = a ubiquinol + n Na(+)(out) + NAD(+). In terms of biological role, NQR complex catalyzes the reduction of ubiquinone-1 to ubiquinol by two successive reactions, coupled with the transport of Na(+) ions from the cytoplasm to the periplasm. NqrA to NqrE are probably involved in the second step, the conversion of ubisemiquinone to ubiquinol. This Haemophilus ducreyi (strain 35000HP / ATCC 700724) protein is Na(+)-translocating NADH-quinone reductase subunit C.